The primary structure comprises 869 residues: Probable beta-glucosidase F (869 aa).

Positions 1-19 (MRVLSAIALVASLVPSALS) are cleaved as a signal peptide. N-linked (GlcNAc...) asparagine glycosylation is found at N69, N77, and N261. The active site involves D289. Residues N332, N364, N399, N425, and N478 are each glycosylated (N-linked (GlcNAc...) asparagine). Positions 678–698 (AYPPTRPPKGPTPTYPTTIPN) are disordered. The segment covering 681–691 (PTRPPKGPTPT) has biased composition (pro residues). A glycan (N-linked (GlcNAc...) asparagine) is linked at N728.

It belongs to the glycosyl hydrolase 3 family.

Its subcellular location is the secreted. The catalysed reaction is Hydrolysis of terminal, non-reducing beta-D-glucosyl residues with release of beta-D-glucose.. It participates in glycan metabolism; cellulose degradation. In terms of biological role, beta-glucosidases are one of a number of cellulolytic enzymes involved in the degradation of cellulosic biomass. Catalyzes the last step releasing glucose from the inhibitory cellobiose. This chain is Probable beta-glucosidase F (bglF), found in Neosartorya fischeri (strain ATCC 1020 / DSM 3700 / CBS 544.65 / FGSC A1164 / JCM 1740 / NRRL 181 / WB 181) (Aspergillus fischerianus).